A 242-amino-acid chain; its full sequence is 6-carboxyhexanoate--CoA ligase (242 aa).

This sequence belongs to the BioW family. As to quaternary structure, homodimer. It depends on Mg(2+) as a cofactor.

The catalysed reaction is heptanedioate + ATP + CoA = 6-carboxyhexanoyl-CoA + AMP + diphosphate. It functions in the pathway metabolic intermediate metabolism; pimeloyl-CoA biosynthesis; pimeloyl-CoA from pimelate: step 1/1. Its function is as follows. Catalyzes the transformation of pimelate into pimeloyl-CoA with concomitant hydrolysis of ATP to AMP. This is 6-carboxyhexanoate--CoA ligase from Veillonella parvula (strain ATCC 10790 / DSM 2008 / CCUG 5123 / JCM 12972 / NCTC 11810 / Te3) (Veillonella alcalescens).